The chain runs to 266 residues: Norfluorocurarine synthase 2 (266 aa).

The AB hydrolase-1 domain occupies 11 to 121 (HFVLVHGAGH…IMPDSTHPPI (111 aa)). Catalysis depends on residues serine 86, aspartate 216, and histidine 244.

The protein belongs to the AB hydrolase superfamily. As to quaternary structure, homodimer. As to expression, mainly expressed in roots.

The enzyme catalyses 17-dehydropreakuammicine + H2O = norfluorocurarine + methanol + CO2. The protein operates within alkaloid biosynthesis. Hydrolase involved in the biosynthesis of curare monoterpene indole alkaloids (MIAs), natural products such as strychnine, a neurotoxic compound used as a pesticide to control rodents, and its pharmacologically active derivatives, including brucine, used to regulate blood pressure. Curare alkaloids act as animal glycine receptor antagonists. Catalyzes the conversion of dehydropreakuammicine to norfluorocurarine. This chain is Norfluorocurarine synthase 2, found in Strychnos nux-vomica (Poison nut).